The following is a 520-amino-acid chain: Peptide chain release factor 3 (520 aa).

The tr-type G domain occupies 8–273; it reads EIRKTFAIIS…AYVDHAPMPS (266 aa). Residues 17 to 24, 85 to 89, and 139 to 142 contribute to the GTP site; these read SHPDAGKT, DTPGH, and NKLD.

Belongs to the TRAFAC class translation factor GTPase superfamily. Classic translation factor GTPase family. PrfC subfamily.

The protein localises to the cytoplasm. Its function is as follows. Increases the formation of ribosomal termination complexes and stimulates activities of RF-1 and RF-2. It binds guanine nucleotides and has strong preference for UGA stop codons. It may interact directly with the ribosome. The stimulation of RF-1 and RF-2 is significantly reduced by GTP and GDP, but not by GMP. This is Peptide chain release factor 3 from Macrococcus caseolyticus (strain JCSC5402) (Macrococcoides caseolyticum).